The primary structure comprises 133 residues: uncharacterized protein (133 aa).

The protein to E.coli ydcQ.

This is an uncharacterized protein from Haemophilus phage HP1 (strain HP1c1) (Bacteriophage HP1).